The following is a 429-amino-acid chain: Phosphoglucosamine mutase (429 aa).

Catalysis depends on serine 96, which acts as the Phosphoserine intermediate. Mg(2+)-binding residues include serine 96, aspartate 230, aspartate 232, and aspartate 234. Serine 96 is modified (phosphoserine).

The protein belongs to the phosphohexose mutase family. Requires Mg(2+) as cofactor. Post-translationally, activated by phosphorylation.

The catalysed reaction is alpha-D-glucosamine 1-phosphate = D-glucosamine 6-phosphate. In terms of biological role, catalyzes the conversion of glucosamine-6-phosphate to glucosamine-1-phosphate. This Thermotoga maritima (strain ATCC 43589 / DSM 3109 / JCM 10099 / NBRC 100826 / MSB8) protein is Phosphoglucosamine mutase.